Here is a 231-residue protein sequence, read N- to C-terminus: ATP phosphoribosyltransferase (231 aa).

It belongs to the ATP phosphoribosyltransferase family. Short subfamily. As to quaternary structure, heteromultimer composed of HisG and HisZ subunits.

It localises to the cytoplasm. The enzyme catalyses 1-(5-phospho-beta-D-ribosyl)-ATP + diphosphate = 5-phospho-alpha-D-ribose 1-diphosphate + ATP. It participates in amino-acid biosynthesis; L-histidine biosynthesis; L-histidine from 5-phospho-alpha-D-ribose 1-diphosphate: step 1/9. Its function is as follows. Catalyzes the condensation of ATP and 5-phosphoribose 1-diphosphate to form N'-(5'-phosphoribosyl)-ATP (PR-ATP). Has a crucial role in the pathway because the rate of histidine biosynthesis seems to be controlled primarily by regulation of HisG enzymatic activity. In Rhizobium etli (strain CIAT 652), this protein is ATP phosphoribosyltransferase (hisG).